A 504-amino-acid chain; its full sequence is Cytochrome P450 7A1 (504 aa).

A helical transmembrane segment spans residues 4–24 (TSLIWGIAIAACCCLWLILGI). Cysteine 444 lines the heme pocket.

It belongs to the cytochrome P450 family. Heme serves as cofactor. In terms of tissue distribution, detected in liver.

It is found in the endoplasmic reticulum membrane. The protein resides in the microsome membrane. It carries out the reaction cholesterol + reduced [NADPH--hemoprotein reductase] + O2 = 7alpha-hydroxycholesterol + oxidized [NADPH--hemoprotein reductase] + H2O + H(+). The catalysed reaction is 4beta-hydroxycholesterol + reduced [NADPH--hemoprotein reductase] + O2 = 4beta,7alpha-dihydroxycholesterol + oxidized [NADPH--hemoprotein reductase] + H2O + H(+). It catalyses the reaction lathosterol + reduced [NADPH--hemoprotein reductase] + O2 = 7alpha,8alpha-epoxy-5alpha-cholestan-3beta-ol + oxidized [NADPH--hemoprotein reductase] + H2O + H(+). The enzyme catalyses lathosterol + reduced [NADPH--hemoprotein reductase] + O2 = 5alpha-cholestan-7-oxo-3beta-ol + oxidized [NADPH--hemoprotein reductase] + H2O + H(+). It carries out the reaction 7-dehydrocholesterol + reduced [NADPH--hemoprotein reductase] + O2 = 7-oxocholesterol + oxidized [NADPH--hemoprotein reductase] + H2O + H(+). The catalysed reaction is (24S)-hydroxycholesterol + reduced [NADPH--hemoprotein reductase] + O2 = (24S)-7alpha-dihydroxycholesterol + oxidized [NADPH--hemoprotein reductase] + H2O + H(+). It catalyses the reaction (24R)-hydroxycholesterol + reduced [NADPH--hemoprotein reductase] + O2 = (24R)-7alpha-dihydroxycholesterol + oxidized [NADPH--hemoprotein reductase] + H2O + H(+). The protein operates within lipid metabolism; bile acid biosynthesis. It participates in steroid metabolism; cholesterol degradation. A cytochrome P450 monooxygenase involved in the metabolism of endogenous cholesterol and its oxygenated derivatives (oxysterols). Mechanistically, uses molecular oxygen inserting one oxygen atom into a substrate, and reducing the second into a water molecule, with two electrons provided by NADPH via cytochrome P450 reductase (CPR; NADPH-ferrihemoprotein reductase). Functions as a critical regulatory enzyme of bile acid biosynthesis and cholesterol homeostasis. Catalyzes the hydroxylation of carbon hydrogen bond at 7-alpha position of cholesterol, a rate-limiting step in cholesterol catabolism and bile acid biosynthesis. 7-alpha hydroxylates several oxysterols, including 4beta-hydroxycholesterol and 24-hydroxycholesterol. Catalyzes the oxidation of the 7,8 double bond of 7-dehydrocholesterol and lathosterol with direct and predominant formation of the 7-keto derivatives. This is Cytochrome P450 7A1 from Homo sapiens (Human).